A 346-amino-acid chain; its full sequence is 3 beta-hydroxysteroid dehydrogenase/Delta 5--&gt;4-isomerase (346 aa).

The active-site Proton acceptor is the tyrosine 147. Lysine 151 provides a ligand contact to NAD(+).

It belongs to the 3-beta-HSD family.

The catalysed reaction is a 3beta-hydroxy-Delta(5)-steroid + NAD(+) = a 3-oxo-Delta(5)-steroid + NADH + H(+). It carries out the reaction a 3-oxo-Delta(5)-steroid = a 3-oxo-Delta(4)-steroid. The protein operates within lipid metabolism; steroid biosynthesis. Its function is as follows. Catalyzes the oxidative conversion of Delta(5)-ene-3-beta-hydroxy steroid, and the oxidative conversion of ketosteroids. The 3-beta-HSD enzymatic system plays a crucial role in the biosynthesis of all classes of hormonal steroids. During viral infection, steroid production contributes to virulence by inhibiting the host inflammatory response. This Homo sapiens (Human) protein is 3 beta-hydroxysteroid dehydrogenase/Delta 5--&gt;4-isomerase (OPG174).